A 347-amino-acid chain; its full sequence is GTP 3',8-cyclase (347 aa).

The region spanning 12 to 242 (FRPFGVLRLS…QRIDARWPLR (231 aa)) is the Radical SAM core domain. Position 19 (Arg19) interacts with GTP. [4Fe-4S] cluster contacts are provided by Cys26 and Cys30. Residue Tyr32 participates in S-adenosyl-L-methionine binding. Cys33 provides a ligand contact to [4Fe-4S] cluster. GTP is bound at residue Arg65. Gly69 lines the S-adenosyl-L-methionine pocket. Residue Thr104 participates in GTP binding. Ser129 is an S-adenosyl-L-methionine binding site. Lys178 is a GTP binding site. Met212 lines the S-adenosyl-L-methionine pocket. [4Fe-4S] cluster is bound by residues Cys275 and Cys278. 280–282 (RLR) contributes to the GTP binding site. A [4Fe-4S] cluster-binding site is contributed by Cys292.

It belongs to the radical SAM superfamily. MoaA family. As to quaternary structure, monomer and homodimer. [4Fe-4S] cluster is required as a cofactor.

The enzyme catalyses GTP + AH2 + S-adenosyl-L-methionine = (8S)-3',8-cyclo-7,8-dihydroguanosine 5'-triphosphate + 5'-deoxyadenosine + L-methionine + A + H(+). Its pathway is cofactor biosynthesis; molybdopterin biosynthesis. Its function is as follows. Catalyzes the cyclization of GTP to (8S)-3',8-cyclo-7,8-dihydroguanosine 5'-triphosphate. This is GTP 3',8-cyclase from Synechococcus sp. (strain WH7803).